A 100-amino-acid chain; its full sequence is UPF0213 protein YhbQ (100 aa).

In terms of domain architecture, GIY-YIG spans T2–R77.

It belongs to the UPF0213 family.

This is UPF0213 protein YhbQ from Escherichia coli O81 (strain ED1a).